Reading from the N-terminus, the 200-residue chain is Imidazole glycerol phosphate synthase subunit HisH (200 aa).

A Glutamine amidotransferase type-1 domain is found at 3–200 (DLALIDAGGA…LRNFLEMSFP (198 aa)). The active-site Nucleophile is the Cys78. Active-site residues include His179 and Glu181.

As to quaternary structure, heterodimer of HisH and HisF.

It is found in the cytoplasm. The catalysed reaction is 5-[(5-phospho-1-deoxy-D-ribulos-1-ylimino)methylamino]-1-(5-phospho-beta-D-ribosyl)imidazole-4-carboxamide + L-glutamine = D-erythro-1-(imidazol-4-yl)glycerol 3-phosphate + 5-amino-1-(5-phospho-beta-D-ribosyl)imidazole-4-carboxamide + L-glutamate + H(+). It carries out the reaction L-glutamine + H2O = L-glutamate + NH4(+). It functions in the pathway amino-acid biosynthesis; L-histidine biosynthesis; L-histidine from 5-phospho-alpha-D-ribose 1-diphosphate: step 5/9. Its function is as follows. IGPS catalyzes the conversion of PRFAR and glutamine to IGP, AICAR and glutamate. The HisH subunit catalyzes the hydrolysis of glutamine to glutamate and ammonia as part of the synthesis of IGP and AICAR. The resulting ammonia molecule is channeled to the active site of HisF. The protein is Imidazole glycerol phosphate synthase subunit HisH of Xanthomonas campestris pv. campestris (strain 8004).